The chain runs to 155 residues: IFN signaling evasion protein OPG029 (155 aa).

This sequence belongs to the orthopoxvirus OPG029 family. In terms of assembly, interacts with host TANK, TBKBP1 and AZI2; these interactions prevent interferon production. Interacts with host STAT2.

In terms of biological role, prevents establishment of cellular antiviral state by blocking virus-induced phosphorylation and activation of interferon regulatory factors 3/IRF3 and 7/IRF7, transcription factors critical for the induction of interferons alpha and beta. This blockage is produced through the inhibition of host TBK1, by binding host TBK1 adapter proteins TBKBP1 and AZI2, thereby producing a strong inhibition of the phosphorylation and activation of IRF3 and IRF7. Also acts as an inhibitor of the cellular response to type I IFN by interacting with host STAT2. Mechanistically, exerts its inhibitory effect after host ISGF3 complex (composed of STAT1, STAT2 and IRF9) binding to the interferon stimulated response element (ISRE). The polypeptide is IFN signaling evasion protein OPG029 (OPG019) (Cynomys gunnisoni (Gunnison's prairie dog)).